A 274-amino-acid polypeptide reads, in one-letter code: Protein bax (274 aa).

Residues 32–64 show a composition bias toward polar residues; the sequence is TTASQKSHLTKASNKQVSSKQEYSRNSAKSSSL. The interval 32–74 is disordered; that stretch reads TTASQKSHLTKASNKQVSSKQEYSRNSAKSSSLPDLRKYPSGT. Residue 247-254 coordinates ATP; the sequence is GYSTKGKS.

The chain is Protein bax (bax) from Escherichia coli (strain K12).